The primary structure comprises 590 residues: Arginine--tRNA ligase (590 aa).

Positions 134-144 (ANPTGPMHVGH) match the 'HIGH' region motif.

This sequence belongs to the class-I aminoacyl-tRNA synthetase family. In terms of assembly, monomer.

It is found in the cytoplasm. The catalysed reaction is tRNA(Arg) + L-arginine + ATP = L-arginyl-tRNA(Arg) + AMP + diphosphate. The chain is Arginine--tRNA ligase from Beijerinckia indica subsp. indica (strain ATCC 9039 / DSM 1715 / NCIMB 8712).